Consider the following 389-residue polypeptide: Succinate--CoA ligase [ADP-forming] subunit beta (389 aa).

One can recognise an ATP-grasp domain in the interval 9-244 (KEILRKFGVA…LDEEDPAEVE (236 aa)). Residues K46, 53–55 (GRG), E99, A102, and E107 each bind ATP. Mg(2+) is bound by residues N199 and D213. Residues N264 and 321–323 (GIM) each bind substrate.

This sequence belongs to the succinate/malate CoA ligase beta subunit family. In terms of assembly, heterotetramer of two alpha and two beta subunits. The cofactor is Mg(2+).

The catalysed reaction is succinate + ATP + CoA = succinyl-CoA + ADP + phosphate. It carries out the reaction GTP + succinate + CoA = succinyl-CoA + GDP + phosphate. It participates in carbohydrate metabolism; tricarboxylic acid cycle; succinate from succinyl-CoA (ligase route): step 1/1. Its function is as follows. Succinyl-CoA synthetase functions in the citric acid cycle (TCA), coupling the hydrolysis of succinyl-CoA to the synthesis of either ATP or GTP and thus represents the only step of substrate-level phosphorylation in the TCA. The beta subunit provides nucleotide specificity of the enzyme and binds the substrate succinate, while the binding sites for coenzyme A and phosphate are found in the alpha subunit. This chain is Succinate--CoA ligase [ADP-forming] subunit beta, found in Paraburkholderia xenovorans (strain LB400).